The following is a 239-amino-acid chain: Octanoyltransferase (239 aa).

Positions 48-236 (EGGDELVWLV…AFETVFGETV (189 aa)) constitute a BPL/LPL catalytic domain. Residues 87 to 94 (RGGEYTYH), 167 to 169 (ALG), and 180 to 182 (GLS) each bind substrate. Cysteine 198 (acyl-thioester intermediate) is an active-site residue.

It belongs to the LipB family.

Its subcellular location is the cytoplasm. It catalyses the reaction octanoyl-[ACP] + L-lysyl-[protein] = N(6)-octanoyl-L-lysyl-[protein] + holo-[ACP] + H(+). It functions in the pathway protein modification; protein lipoylation via endogenous pathway; protein N(6)-(lipoyl)lysine from octanoyl-[acyl-carrier-protein]: step 1/2. In terms of biological role, catalyzes the transfer of endogenously produced octanoic acid from octanoyl-acyl-carrier-protein onto the lipoyl domains of lipoate-dependent enzymes. Lipoyl-ACP can also act as a substrate although octanoyl-ACP is likely to be the physiological substrate. This Rhizobium etli (strain CIAT 652) protein is Octanoyltransferase.